Here is a 288-residue protein sequence, read N- to C-terminus: Urease accessory protein UreD 1 (288 aa).

The span at 1-10 (MHGPLAPAPS) shows a compositional bias: pro residues. Residues 1–35 (MHGPLAPAPSPERLGAAPARQRSDGRIRLRVGPAR) are disordered.

The protein belongs to the UreD family. UreD, UreF and UreG form a complex that acts as a GTP-hydrolysis-dependent molecular chaperone, activating the urease apoprotein by helping to assemble the nickel containing metallocenter of UreC. The UreE protein probably delivers the nickel.

It is found in the cytoplasm. Functionally, required for maturation of urease via the functional incorporation of the urease nickel metallocenter. This is Urease accessory protein UreD 1 from Methylobacterium radiotolerans (strain ATCC 27329 / DSM 1819 / JCM 2831 / NBRC 15690 / NCIMB 10815 / 0-1).